Reading from the N-terminus, the 1830-residue chain is Dedicator of cytokinesis protein 2 (1830 aa).

In terms of domain architecture, SH3 spans Asp-8–Val-69. Lys-304 is modified (N6-acetyllysine). The C2 DOCK-type domain maps to Arg-423–Cys-607. Ser-588 and Ser-593 each carry phosphoserine. Residue Lys-738 is modified to N6-acetyllysine. The interval Cys-939 to Pro-1476 is interaction with CRKL. A DOCKER domain is found at Tyr-1211–Met-1622. Residues Met-1651–Ser-1665 are compositionally biased toward polar residues. The segment at Met-1651–Arg-1704 is disordered. A phosphoserine mark is found at Ser-1685, Ser-1706, Ser-1731, and Ser-1784.

This sequence belongs to the DOCK family. As to quaternary structure, homodimer. Interacts with RAC1 and RAC2. Interacts with CRKL and VAV. Interacts with CD3Z. As to expression, specifically expressed in hematopoietic cells. Highly expressed in peripheral blood leukocytes, and expressed at intermediate level in thymus and spleen. Expressed at very low level in the small intestine and colon.

It localises to the endomembrane system. Its subcellular location is the cytoplasm. It is found in the cytoskeleton. Functionally, involved in cytoskeletal rearrangements required for lymphocyte migration in response of chemokines. Activates RAC1 and RAC2, but not CDC42, by functioning as a guanine nucleotide exchange factor (GEF), which exchanges bound GDP for free GTP. May also participate in IL2 transcriptional activation via the activation of RAC2. The protein is Dedicator of cytokinesis protein 2 (DOCK2) of Homo sapiens (Human).